The following is a 411-amino-acid chain: MMP alpha-(1-&gt;4)-mannosyltransferase (411 aa).

It belongs to the glycosyltransferase group 1 family. Glycosyltransferase 4 subfamily.

The catalysed reaction is [3-O-methyl-alpha-D-mannosyl-(1-&gt;4)](n)-3-O-methyl-D-mannose + GDP-alpha-D-mannose = alpha-D-mannosyl-(1-&gt;4)-[3-O-methyl-alpha-D-mannosyl-(1-&gt;4)](n)-3-O-methyl-D-mannose + GDP + H(+). The enzyme catalyses [3-O-methyl-alpha-D-mannosyl-(1-&gt;4)](n)-1-O,3-O-dimethyl-alpha-D-mannose + GDP-alpha-D-mannose = alpha-D-mannosyl-(1-&gt;4)-[3-O-methyl-alpha-D-mannosyl-(1-&gt;4)](n)-1-O,3-O-dimethyl-alpha-D-mannose + GDP + H(+). Activity is significantly enhanced in the presence of Mg(2+). Glycosyltransferase involved in the biosynthesis of 3-O-methylmannose polysaccharides (MMP), which are intracellular polymethylated polysaccharides implicated in the modulation of fatty acid metabolism in non-tuberculous mycobacteria. Highly specific alpha-(1-&gt;4)-mannosyltransferase that can transfer mannose units from GDP-mannose to a wide range of alpha-(1-&gt;4) oligomannosides longer than three mannoses, including all hydrolytic products of MmpH. Can use synthetic trimannosides and tetramannosides as substrates, but not mono- and disaccharides, and is significantly more active with the methylated substrates, preferring the tetramannosides over the trimannosides. In Mycolicibacterium hassiacum (strain DSM 44199 / CIP 105218 / JCM 12690 / 3849) (Mycobacterium hassiacum), this protein is MMP alpha-(1-&gt;4)-mannosyltransferase.